The following is an 855-amino-acid chain: Glucans biosynthesis glucosyltransferase H (855 aa).

6 consecutive transmembrane segments (helical) span residues 142-162, 196-216, 515-535, 572-592, 606-626, and 682-702; these read ILLT…KGIL, ILVL…TALM, VFLT…FLVL, LFST…ILIW, TLSM…RMIF, and FLWW…VSVI.

The protein belongs to the glycosyltransferase 2 family. OpgH subfamily.

The protein resides in the cell inner membrane. Its pathway is glycan metabolism; osmoregulated periplasmic glucan (OPG) biosynthesis. Functionally, involved in the biosynthesis of osmoregulated periplasmic glucans (OPGs). The polypeptide is Glucans biosynthesis glucosyltransferase H (Pseudomonas entomophila (strain L48)).